Here is a 117-residue protein sequence, read N- to C-terminus: Large ribosomal subunit protein bL20c (117 aa).

This sequence belongs to the bacterial ribosomal protein bL20 family.

It is found in the plastid. Its subcellular location is the chloroplast. Functionally, binds directly to 23S ribosomal RNA and is necessary for the in vitro assembly process of the 50S ribosomal subunit. It is not involved in the protein synthesizing functions of that subunit. The protein is Large ribosomal subunit protein bL20c of Acorus gramineus (Dwarf sweet flag).